The chain runs to 767 residues: DNA topoisomerase 1 (767 aa).

A compositionally biased stretch (basic and acidic residues) spans 1–23 (MSGDHLHNDSQIEADFRLNDSHK). A disordered region spans residues 1–201 (MSGDHLHNDS…NKKKKPKKEE (201 aa)). Serine 2 carries the post-translational modification N-acetylserine. A phosphoserine mark is found at serine 2 and serine 10. Positions 24 to 39 (HKDKHKDREHRHKEHK) are enriched in basic residues. Over residues 40 to 110 (KDKEKDREKS…DAKIKKEKEN (71 aa)) the composition is skewed to basic and acidic residues. Phosphoserine is present on serine 59. Lysine 103 is covalently cross-linked (Glycyl lysine isopeptide (Lys-Gly) (interchain with G-Cter in SUMO2)). Residue lysine 105 forms a Glycyl lysine isopeptide (Lys-Gly) (interchain with G-Cter in SUMO); alternate linkage. Lysine 105 is covalently cross-linked (Glycyl lysine isopeptide (Lys-Gly) (interchain with G-Cter in SUMO2); alternate). At serine 114 the chain carries Phosphoserine. Lysine 119 is covalently cross-linked (Glycyl lysine isopeptide (Lys-Gly) (interchain with G-Cter in SUMO); alternate). Residue lysine 119 forms a Glycyl lysine isopeptide (Lys-Gly) (interchain with G-Cter in SUMO2); alternate linkage. Lysine 119 participates in a covalent cross-link: Glycyl lysine isopeptide (Lys-Gly) (interchain with G-Cter in SUMO1); alternate. The segment covering 131–168 (PKEDIKPLKRPRDEDDADYKPKKIKTEDIKKEKKRKLE) has biased composition (basic and acidic residues). Residues lysine 136 and lysine 150 each participate in a glycyl lysine isopeptide (Lys-Gly) (interchain with G-Cter in SUMO2) cross-link. Lysine 155 participates in a covalent cross-link: Glycyl lysine isopeptide (Lys-Gly) (interchain with G-Cter in SUMO); alternate. Lysine 155 participates in a covalent cross-link: Glycyl lysine isopeptide (Lys-Gly) (interchain with G-Cter in SUMO2); alternate. Glycyl lysine isopeptide (Lys-Gly) (interchain with G-Cter in SUMO2) cross-links involve residues lysine 160 and lysine 166. Lysine 174 participates in a covalent cross-link: Glycyl lysine isopeptide (Lys-Gly) (interchain with G-Cter in SUMO2); alternate. N6-acetyllysine; alternate is present on lysine 174. The span at 181 to 201 (KDKDKKVPEPDNKKKKPKKEE) shows a compositional bias: basic and acidic residues. A Glycyl lysine isopeptide (Lys-Gly) (interchain with G-Cter in SUMO2) cross-link involves residue lysine 206. Lysine 282 carries the post-translational modification N6-acetyllysine. A Glycyl lysine isopeptide (Lys-Gly) (interchain with G-Cter in SUMO2) cross-link involves residue lysine 338. Interaction with DNA stretches follow at residues 427-428 (KY) and 490-495 (RAGNEK). Residues 434-767 (SSRIKGEKDW…IDMADEDYEF (334 aa)) enclose the Topo IB-type catalytic domain. Position 508 is a phosphoserine; by CK2 (serine 508). Lysine 551 participates in a covalent cross-link: Glycyl lysine isopeptide (Lys-Gly) (interchain with G-Cter in SUMO2). An interaction with DNA region spans residues 587 to 589 (TAK). Glycyl lysine isopeptide (Lys-Gly) (interchain with G-Cter in SUMO2) cross-links involve residues lysine 644, lysine 702, and lysine 714. The active-site O-(3'-phospho-DNA)-tyrosine intermediate is tyrosine 725.

It belongs to the type IB topoisomerase family. Monomer. Interacts with ERCC6. Interacts with TPRN; TPRN interacts with a number of DNA damage response proteins, is recruited to sites of DNA damage and may play a role in DNA damage repair. Sumoylated. Lys-119 is the main site of sumoylation. Sumoylation plays a role in partitioning TOP1 between nucleoli and nucleoplasm. Levels are dramatically increased on camptothecin (CPT) treatment. Post-translationally, phosphorylation at Ser-508 by CK2 increases binding to supercoiled DNA and sensitivity to camptothecin.

The protein resides in the nucleus. The protein localises to the nucleolus. It is found in the nucleoplasm. It carries out the reaction ATP-independent breakage of single-stranded DNA, followed by passage and rejoining.. Its activity is regulated as follows. Specifically inhibited by camptothecin (CPT), a plant alkaloid with antitumor activity. Functionally, releases the supercoiling and torsional tension of DNA introduced during the DNA replication and transcription by transiently cleaving and rejoining one strand of the DNA duplex. Introduces a single-strand break via transesterification at a target site in duplex DNA. The scissile phosphodiester is attacked by the catalytic tyrosine of the enzyme, resulting in the formation of a DNA-(3'-phosphotyrosyl)-enzyme intermediate and the expulsion of a 5'-OH DNA strand. The free DNA strand then rotates around the intact phosphodiester bond on the opposing strand, thus removing DNA supercoils. Finally, in the religation step, the DNA 5'-OH attacks the covalent intermediate to expel the active-site tyrosine and restore the DNA phosphodiester backbone. Regulates the alternative splicing of tissue factor (F3) pre-mRNA in endothelial cells. Involved in the circadian transcription of the core circadian clock component BMAL1 by altering the chromatin structure around the ROR response elements (ROREs) on the BMAL1 promoter. This Chlorocebus aethiops (Green monkey) protein is DNA topoisomerase 1 (TOP1).